A 199-amino-acid polypeptide reads, in one-letter code: MYEGAVQELIDELGRLPGVGPKSAQRLAFHILEADPEDMKRLVTAITTVKERVKFCTVCFNVTEQETCNICRDQRRDPSVICVVEESKDVLAVERTRSFRGRYHVLGGAINPIAGIGPEQLRIRELLTRLNDGAIQEIIIATDPNLEGEATATYLARMLKSIGITVTRLASGLPVGGDLEYADEVTLGRAFEGRRNALL.

The segment at 56-71 (CTVCFNVTEQETCNIC) adopts a C4-type zinc-finger fold. Residues 79–174 (SVICVVEESK…TVTRLASGLP (96 aa)) form the Toprim domain.

Belongs to the RecR family.

Functionally, may play a role in DNA repair. It seems to be involved in an RecBC-independent recombinational process of DNA repair. It may act with RecF and RecO. The sequence is that of Recombination protein RecR from Paenarthrobacter aurescens (strain TC1).